A 122-amino-acid chain; its full sequence is Small ribosomal subunit protein uS13 (122 aa).

The interval 95–122 (GLPVRGQRTHTNARTRKGPAKPIAGKKK) is disordered.

Belongs to the universal ribosomal protein uS13 family. As to quaternary structure, part of the 30S ribosomal subunit. Forms a loose heterodimer with protein S19. Forms two bridges to the 50S subunit in the 70S ribosome.

Located at the top of the head of the 30S subunit, it contacts several helices of the 16S rRNA. In the 70S ribosome it contacts the 23S rRNA (bridge B1a) and protein L5 of the 50S subunit (bridge B1b), connecting the 2 subunits; these bridges are implicated in subunit movement. Contacts the tRNAs in the A and P-sites. This Caulobacter vibrioides (strain ATCC 19089 / CIP 103742 / CB 15) (Caulobacter crescentus) protein is Small ribosomal subunit protein uS13.